Reading from the N-terminus, the 420-residue chain is Glyceraldehyde-3-phosphate dehydrogenase GAPCP2, chloroplastic (420 aa).

The N-terminal 66 residues, 1–66 (MALSSLLRSA…YNAKRVQPIK (66 aa)), are a transit peptide targeting the chloroplast. NAD(+)-binding positions include 94 to 95 (RI), Asp116, and Arg162. D-glyceraldehyde 3-phosphate contacts are provided by residues 233–235 (SCT), Thr264, 293–294 (TG), and Arg316. The active-site Nucleophile is the Cys234. Residue Asn398 participates in NAD(+) binding.

The protein belongs to the glyceraldehyde-3-phosphate dehydrogenase family. As to quaternary structure, homotetramer. Expressed in shoot and root vasculature, leaf veins and vascular tissue of flowers and siliques.

It is found in the plastid. It localises to the chloroplast stroma. The catalysed reaction is D-glyceraldehyde 3-phosphate + phosphate + NAD(+) = (2R)-3-phospho-glyceroyl phosphate + NADH + H(+). Its function is as follows. Involved in plastidial glycolytic pathway and plays a specific role in glycolytic energy production in non-green plastids and chloroplasts. Essential for breakdown of starch to form sucrose for export to non-photosynthetic tissues, and to generate primary metabolites for anabolic pathways such as fatty acid and amino acid synthesis. Plays an important role in plant development by providing substrates for the phosphorylated pathway of serine biosynthesis in roots. Plays a crucial role in pollen development. Functionally redundant with GAPCP1. The protein is Glyceraldehyde-3-phosphate dehydrogenase GAPCP2, chloroplastic (GAPCP2) of Arabidopsis thaliana (Mouse-ear cress).